Consider the following 247-residue polypeptide: MRGIVGFYITYLLCLILGIACVVLVVHWNFMYRDGFAWDGSSKNFNWHPVLMVTGMLVLYGNAAVVYRIPLTWGHNKLPWKLLHAGLLLLSFIFSVIGLCAVFNFHNVHHTANLYSLHSWVGICTAALFTAQWVMGFTSFLLPCTPMAVRAFVKPTHVWMGAMILVLSIVSCISGINEKLFFVLKETTNGTKPYSALPPEAVAANSLGVIIVAFGLVVLKILSNQMWQRPEPGDDEGVYRPLAYDGS.

The Cytoplasmic portion of the chain corresponds to 1–3; that stretch reads MRG. The chain crosses the membrane as a helical span at residues 4-24; the sequence is IVGFYITYLLCLILGIACVVL. A Cytochrome b561 domain is found at 13-223; that stretch reads LCLILGIACV…FGLVVLKILS (211 aa). At 25–46 the chain is on the lumenal side; it reads VVHWNFMYRDGFAWDGSSKNFN. The helical transmembrane segment at 47–67 threads the bilayer; it reads WHPVLMVTGMLVLYGNAAVVY. 2 residues coordinate heme b: histidine 48 and arginine 68. Topologically, residues 68-82 are cytoplasmic; sequence RIPLTWGHNKLPWKL. Residues lysine 77 and lysine 81 each coordinate L-ascorbate. The helical transmembrane segment at 83–103 threads the bilayer; the sequence is LHAGLLLLSFIFSVIGLCAVF. Residues histidine 84, 113–116, and histidine 118 contribute to the heme b site; that span reads NLYS. The Lumenal segment spans residues 104–120; that stretch reads NFHNVHHTANLYSLHSW. Residues 121–141 traverse the membrane as a helical segment; sequence VGICTAALFTAQWVMGFTSFL. The Cytoplasmic portion of the chain corresponds to 142 to 155; the sequence is LPCTPMAVRAFVKP. Arginine 150 lines the L-ascorbate pocket. Residues 156-176 form a helical membrane-spanning segment; sequence THVWMGAMILVLSIVSCISGI. Histidine 157 and glutamate 178 together coordinate heme b. Topologically, residues 177–201 are lumenal; sequence NEKLFFVLKETTNGTKPYSALPPEA. An N-linked (GlcNAc...) asparagine glycan is attached at asparagine 189. Residues 202-222 traverse the membrane as a helical segment; the sequence is VAANSLGVIIVAFGLVVLKIL. The Cytoplasmic portion of the chain corresponds to 223–247; the sequence is SNQMWQRPEPGDDEGVYRPLAYDGS. Glutamine 228 is a binding site for heme b.

As to quaternary structure, homodimer. Heme b is required as a cofactor.

It localises to the late endosome membrane. Its subcellular location is the lysosome membrane. The enzyme catalyses Fe(3+)(out) + L-ascorbate(in) = monodehydro-L-ascorbate radical(in) + Fe(2+)(out) + H(+). In terms of biological role, transmembrane reductase that uses ascorbate as an electron donor in the cytoplasm and transfers electrons across membranes to reduce iron cations Fe(3+) into Fe(2+) in the lumen of the late endosome and lysosome. Reduced iron can then be extruded from the late endosome and lysosome to the cytoplasm by divalent metal-specific transporters. It is therefore most probably involved in endosomal and lysosomal cellular iron homeostasis. The protein is Lysosomal membrane ascorbate-dependent ferrireductase CYB561A3 (cyb561a3a) of Danio rerio (Zebrafish).